The following is a 778-amino-acid chain: Ubiquitin thioesterase trabid (778 aa).

2 consecutive RanBP2-type zinc fingers follow at residues 5 to 36 and 89 to 118; these read KDDA…SKPL and DSEK…KRGG. Residues 187–197 show a composition bias toward polar residues; it reads ASHNQSQSQHR. Positions 187-226 are disordered; the sequence is ASHNQSQSQHRQPVLQQQMQLQLQPQQQRESSSSAAVPPQ. Residues 198-226 are compositionally biased toward low complexity; the sequence is QPVLQQQMQLQLQPQQQRESSSSAAVPPQ. The RanBP2-type 3 zinc finger occupies 232–261; sequence YVSKWACNSCTYENWPRSIKCSMCGKTRER. A disordered region spans residues 265–290; that stretch reads GSQNDLHASSSLNSQEENQQQLQQPN. Positions 273–288 are enriched in low complexity; sequence SSSLNSQEENQQQLQQ. Residues 507 to 665 form the OTU domain; sequence MFVLWNRSAG…RGHFSALVPM (159 aa). The active-site Nucleophile is C518. H658 acts as the Proton acceptor in catalysis. 3 positions are modified to phosphoserine: S770, S771, and S775.

The protein belongs to the peptidase C64 family. In terms of assembly, interacts with Apc.

It catalyses the reaction Thiol-dependent hydrolysis of ester, thioester, amide, peptide and isopeptide bonds formed by the C-terminal Gly of ubiquitin (a 76-residue protein attached to proteins as an intracellular targeting signal).. Its function is as follows. Positive regulator of the Wnt signaling pathway. Specifically cleaves 'Lys-63'-linked ubiquitin chains. May act by deubiquitinating APC protein, a negative regulator of Wnt-mediated transcription. Required for an efficient wg response, but not for other signaling responses, in the eye. This chain is Ubiquitin thioesterase trabid (trbd), found in Drosophila melanogaster (Fruit fly).